A 268-amino-acid chain; its full sequence is Phosphate import ATP-binding protein PstB 3 (268 aa).

Residues 15 to 254 (LRTENLNVYY…DATESIFNNP (240 aa)) form the ABC transporter domain. 47-54 (GPSGCGKS) contributes to the ATP binding site.

This sequence belongs to the ABC transporter superfamily. Phosphate importer (TC 3.A.1.7) family. In terms of assembly, the complex is composed of two ATP-binding proteins (PstB), two transmembrane proteins (PstC and PstA) and a solute-binding protein (PstS).

Its subcellular location is the cell inner membrane. The catalysed reaction is phosphate(out) + ATP + H2O = ADP + 2 phosphate(in) + H(+). In terms of biological role, part of the ABC transporter complex PstSACB involved in phosphate import. Responsible for energy coupling to the transport system. This chain is Phosphate import ATP-binding protein PstB 3, found in Nostoc sp. (strain PCC 7120 / SAG 25.82 / UTEX 2576).